A 221-amino-acid polypeptide reads, in one-letter code: UPF0502 protein PA14_19450 (221 aa).

It belongs to the UPF0502 family.

In Pseudomonas aeruginosa (strain UCBPP-PA14), this protein is UPF0502 protein PA14_19450.